We begin with the raw amino-acid sequence, 397 residues long: 1-carboxy-3-chloro-3,4-dihydroxycyclo hexa-1,5-diene dehydrogenase (397 aa).

To P.putida PHT4.

This Comamonas testosteroni (Pseudomonas testosteroni) protein is 1-carboxy-3-chloro-3,4-dihydroxycyclo hexa-1,5-diene dehydrogenase (cbaC).